The sequence spans 89 residues: Small ribosomal subunit protein uS15 (89 aa).

This sequence belongs to the universal ribosomal protein uS15 family. As to quaternary structure, part of the 30S ribosomal subunit. Forms a bridge to the 50S subunit in the 70S ribosome, contacting the 23S rRNA.

One of the primary rRNA binding proteins, it binds directly to 16S rRNA where it helps nucleate assembly of the platform of the 30S subunit by binding and bridging several RNA helices of the 16S rRNA. Its function is as follows. Forms an intersubunit bridge (bridge B4) with the 23S rRNA of the 50S subunit in the ribosome. The polypeptide is Small ribosomal subunit protein uS15 (Aeromonas hydrophila subsp. hydrophila (strain ATCC 7966 / DSM 30187 / BCRC 13018 / CCUG 14551 / JCM 1027 / KCTC 2358 / NCIMB 9240 / NCTC 8049)).